Consider the following 174-residue polypeptide: ATP-dependent protease subunit HslV (174 aa).

Residue Thr-2 is part of the active site. Na(+)-binding residues include Gly-157, Cys-160, and Thr-163.

This sequence belongs to the peptidase T1B family. HslV subfamily. A double ring-shaped homohexamer of HslV is capped on each side by a ring-shaped HslU homohexamer. The assembly of the HslU/HslV complex is dependent on binding of ATP.

It localises to the cytoplasm. The catalysed reaction is ATP-dependent cleavage of peptide bonds with broad specificity.. Allosterically activated by HslU binding. Its function is as follows. Protease subunit of a proteasome-like degradation complex believed to be a general protein degrading machinery. In Shewanella loihica (strain ATCC BAA-1088 / PV-4), this protein is ATP-dependent protease subunit HslV.